The primary structure comprises 1194 residues: Multidrug efflux ATP-binding/permease protein Rv0194 (1194 aa).

Transmembrane regions (helical) follow at residues 20–40, 56–76, 130–150, 153–173, 258–278, and 279–299; these read LLLGFGAALAGTVIAVLVPLV, LAPWAVVLVAAAGATYLLMYV, LLFDVPNVLRHVLTLLLGVAV, WLSVPLALLAVLLVPVIGLIA, FALGGWMAAQGSITVGTFVAF, and WACLTLLARPACDLAGMLTIA. The ABC transmembrane type-1 1 domain maps to 21–301; it reads LLGFGAALAG…LAGMLTIAQQ (281 aa). The region spanning 334 to 568 is the ABC transporter 1 domain; that stretch reads LEFQRVSFGY…CPRYRELLSP (235 aa). 367–374 lines the ATP pocket; the sequence is GAPGSGKS. A run of 6 helical transmembrane segments spans residues 628–648, 660–680, 743–763, 765–785, 847–867, and 878–898; these read ALSLLLVAVQTCAGLLPPLLI, VLSALWWAALAGTATVVIRWV, LVVAVISVVTLVGILVALLAI, ARLVLLIFTTMPVLALATWQF, LLALYYPFVALLCSLATTLVL, and VISVGALVTYLLYIELLYTPI. The region spanning 628–910 is the ABC transmembrane type-1 2 domain; that stretch reads ALSLLLVAVQ…LAQMFDDYQR (283 aa). Positions 942–1177 constitute an ABC transporter 2 domain; the sequence is VVFDAVHYSY…GGHYSRLWAA (236 aa). An ATP-binding site is contributed by 976–983; sequence GSTGSGKS.

Belongs to the ABC transporter superfamily. Lipid exporter (TC 3.A.1.106) family.

The protein localises to the cell inner membrane. With respect to regulation, efflux is inhibited by reserpine. Functionally, overexpression in M.smegmatis increases resistance to erythromycin, ampicillin, novobiocin and vancomycin. It also reduces accumulation of ethidium bromide in the cell. This chain is Multidrug efflux ATP-binding/permease protein Rv0194, found in Mycobacterium tuberculosis (strain ATCC 25618 / H37Rv).